Consider the following 151-residue polypeptide: Transcriptional regulator MraZ (151 aa).

2 SpoVT-AbrB domains span residues 5-51 and 81-124; these read AHEL…PVAE and AEIL…GREQ.

It belongs to the MraZ family. As to quaternary structure, forms oligomers.

It is found in the cytoplasm. The protein resides in the nucleoid. This chain is Transcriptional regulator MraZ, found in Neisseria meningitidis serogroup A / serotype 4A (strain DSM 15465 / Z2491).